The sequence spans 179 residues: Transcription factor NF-E4 (179 aa).

Lys43 is subject to N6-acetyllysine. Positions 100–179 (AMKATGPHNA…QLPSLHLSQG (80 aa)) are disordered. Polar residues-rich tracts occupy residues 143-153 (LSQSNPPTRIS) and 163-179 (ALEQ…LSQG).

In terms of assembly, component of the SSP (stage selector protein) complex, which appears to be a heteromer of TFCP2 and 2 copies of NFE4. Interacts with HDAC1 and PCAF. Isoform 2 interacts with TFCP2. Acetylation at Lys-43 prolongs the protein half-life by preventing ubiquitin-mediated degradation and reduces the interaction between NF-E4 and HDAC1, potentially maximizing the activating ability of the factor at the gamma-promoter. Post-translationally, ubiquitinated; leading to its degradation by the proteasome. Acetylation at Lys-43 prevents ubiquitination. In terms of tissue distribution, specifically expressed in fetal liver, cord blood and bone marrow. Also expressed in the K562 and HEL cell lines, which constitutively express the fetal globin genes.

It is found in the nucleus. Functionally, functions as part of the SSP (stage selector protein) complex, a complex that contributes to the preferential expression of the gamma-gene in fetal erythroid cells by facilitating the interaction of the gamma-globin genes with enhancer elements contained in the locus control region (LCR). The complex binds to the stage selector element (SSE) in the proximal gamma-globin promoter. In contrast, isoform 2 acts as a repressor of gamma-globin gene expression by preventing NFE2 and RNA polymerase II recruitment to the promoter. The sequence is that of Transcription factor NF-E4 (NFE4) from Homo sapiens (Human).